An 85-amino-acid polypeptide reads, in one-letter code: Large ribosomal subunit protein bL27 (85 aa).

The tract at residues 1–20 (MAHKKAGGSTRNGRDSEAKR) is disordered.

This sequence belongs to the bacterial ribosomal protein bL27 family.

The protein is Large ribosomal subunit protein bL27 of Klebsiella pneumoniae (strain 342).